The chain runs to 550 residues: Glucose-6-phosphate isomerase 1 (550 aa).

E355 (proton donor) is an active-site residue. Active-site residues include H386 and K512.

This sequence belongs to the GPI family.

It localises to the cytoplasm. The enzyme catalyses alpha-D-glucose 6-phosphate = beta-D-fructose 6-phosphate. Its pathway is carbohydrate biosynthesis; gluconeogenesis. It functions in the pathway carbohydrate degradation; glycolysis; D-glyceraldehyde 3-phosphate and glycerone phosphate from D-glucose: step 2/4. In terms of biological role, catalyzes the reversible isomerization of glucose-6-phosphate to fructose-6-phosphate. The sequence is that of Glucose-6-phosphate isomerase 1 from Rhodococcus jostii (strain RHA1).